We begin with the raw amino-acid sequence, 30 residues long: Cyclotide cter-Q (30 aa).

The cyclopeptide (Gly-Asn) cross-link spans 1 to 30 (GIPCGESCVFIPCISTVIGCSCKNKVCYRN). 3 cysteine pairs are disulfide-bonded: Cys-4–Cys-20, Cys-8–Cys-22, and Cys-13–Cys-27.

Post-translationally, this is a cyclic peptide.

The protein localises to the secreted. Probably participates in a plant defense mechanism. This Clitoria ternatea (Butterfly pea) protein is Cyclotide cter-Q.